Here is a 361-residue protein sequence, read N- to C-terminus: Peptide chain release factor 1 (361 aa).

Q237 is modified (N5-methylglutamine). Basic and acidic residues predominate over residues D285–R296. The interval D285–R305 is disordered.

This sequence belongs to the prokaryotic/mitochondrial release factor family. Methylated by PrmC. Methylation increases the termination efficiency of RF1.

It localises to the cytoplasm. Functionally, peptide chain release factor 1 directs the termination of translation in response to the peptide chain termination codons UAG and UAA. This Shewanella halifaxensis (strain HAW-EB4) protein is Peptide chain release factor 1.